A 492-amino-acid polypeptide reads, in one-letter code: Probable cobyric acid synthase (492 aa).

Positions 252–444 (PIEVNIVKFS…FHGILENFEF (193 aa)) constitute a GATase cobBQ-type domain. The active-site Nucleophile is C330. H436 is a catalytic residue.

This sequence belongs to the CobB/CobQ family. CobQ subfamily.

The protein operates within cofactor biosynthesis; adenosylcobalamin biosynthesis. Functionally, catalyzes amidations at positions B, D, E, and G on adenosylcobyrinic A,C-diamide. NH(2) groups are provided by glutamine, and one molecule of ATP is hydrogenolyzed for each amidation. The polypeptide is Probable cobyric acid synthase (Methanococcus maripaludis (strain C6 / ATCC BAA-1332)).